A 483-amino-acid chain; its full sequence is GTPase Der (483 aa).

2 consecutive EngA-type G domains span residues 3-167 (FTLA…GEER) and 212-387 (LRIA…EIWN). Residues 9-16 (GRPNVGKS), 56-60 (DTAGL), 119-122 (NKAE), 218-225 (GRPNAGKS), 265-269 (DTAGM), and 330-333 (NKWD) contribute to the GTP site. Residues 388 to 472 (RRISTGRLNR…PIRLSLRTSD (85 aa)) form the KH-like domain.

Belongs to the TRAFAC class TrmE-Era-EngA-EngB-Septin-like GTPase superfamily. EngA (Der) GTPase family. As to quaternary structure, associates with the 50S ribosomal subunit.

Functionally, GTPase that plays an essential role in the late steps of ribosome biogenesis. The polypeptide is GTPase Der (Brucella ovis (strain ATCC 25840 / 63/290 / NCTC 10512)).